The primary structure comprises 1131 residues: Activity-dependent neuroprotector homeobox protein 2 (1131 aa).

Residues 73-96 (YCCGLCKYSTKVLTSFKNHLHRYH) form a C2H2-type 1 zinc finger. The segment at 106–128 (IPCPNCVFASQPKVVGRHFRMFH) adopts a C2H2-type 2; degenerate zinc-finger fold. Residues Lys-118 and Lys-146 each participate in a glycyl lysine isopeptide (Lys-Gly) (interchain with G-Cter in SUMO2) cross-link. A C2H2-type 3; degenerate zinc finger spans residues 155-178 (FTCLKCNFSNTLYYSMKKHVLVAH). The C2H2-type 4 zinc-finger motif lies at 215–240 (YYCKKCNANASSQDALMYHILTSDIH). Residues 274–285 (LAAPANGSAPSA) show a composition bias toward low complexity. Residues 274-329 (LAAPANGSAPSAPAQPPCFHLALPQNSPSPAAGQPVTVAQGAPGSLTHSPPAAGQS) are disordered. The C2H2-type 5; degenerate zinc-finger motif lies at 694–716 (KTCPVCNELFPSNVYQVHMEVAH). The segment at 747–768 (VRCLSCKCLVSEEELIHHLLMH) adopts a C2H2-type 6; degenerate zinc-finger fold. 2 consecutive C2H2-type zinc fingers follow at residues 770 to 793 (LGCL…RNRH) and 875 to 898 (STCP…KERH). The C2H2-type 9; degenerate zinc finger occupies 913–937 (FKCIHCCGVYTGNMTLAAIAVHLVR). Residues Lys-979 and Lys-1018 each participate in a glycyl lysine isopeptide (Lys-Gly) (interchain with G-Cter in SUMO2) cross-link. At Ser-1024 the chain carries Phosphoserine. Residue Lys-1032 forms a Glycyl lysine isopeptide (Lys-Gly) (interchain with G-Cter in SUMO1); alternate linkage. Lys-1032 is covalently cross-linked (Glycyl lysine isopeptide (Lys-Gly) (interchain with G-Cter in SUMO2); alternate). Residues 1043–1102 (PKKYEGRSYEEKKQFLKDYFHKKPYPSKKEIELLSSLFWVWKIDVASFFGKRRYICMKAI) constitute a DNA-binding region (homeobox).

Belongs to the krueppel C2H2-type zinc-finger protein family. May interact with SMARCA4/BRG1.

The protein resides in the nucleus. Functionally, may be involved in transcriptional regulation. May play a role in neuronal function; perhaps involved in protection of brain tissues from oxidative stress. May be involved in erythroid differentiation. This Homo sapiens (Human) protein is Activity-dependent neuroprotector homeobox protein 2 (ADNP2).